A 178-amino-acid polypeptide reads, in one-letter code: CDP-archaeol synthase (178 aa).

The next 4 membrane-spanning stretches (helical) occupy residues 3–23 (LLLL…ANAV), 56–76 (FFGI…VILY), 91–111 (IILS…GSFI), and 136–156 (LLFA…LLVI).

This sequence belongs to the CDP-archaeol synthase family. It depends on Mg(2+) as a cofactor.

The protein localises to the cell membrane. The enzyme catalyses 2,3-bis-O-(geranylgeranyl)-sn-glycerol 1-phosphate + CTP + H(+) = CDP-2,3-bis-O-(geranylgeranyl)-sn-glycerol + diphosphate. The protein operates within membrane lipid metabolism; glycerophospholipid metabolism. Functionally, catalyzes the formation of CDP-2,3-bis-(O-geranylgeranyl)-sn-glycerol (CDP-archaeol) from 2,3-bis-(O-geranylgeranyl)-sn-glycerol 1-phosphate (DGGGP) and CTP. This reaction is the third ether-bond-formation step in the biosynthesis of archaeal membrane lipids. This Methanococcus maripaludis (strain C5 / ATCC BAA-1333) protein is CDP-archaeol synthase.